Reading from the N-terminus, the 240-residue chain is uncharacterized protein (240 aa).

D66 acts as the Proton acceptor in catalysis. Residue D129 is part of the active site. The active-site Proton acceptor is the H131.

The protein belongs to the glucosamine/galactosamine-6-phosphate isomerase family.

This is an uncharacterized protein from Escherichia coli (strain K12).